The primary structure comprises 301 residues: Recombination-associated protein RdgC (301 aa).

It belongs to the RdgC family.

It localises to the cytoplasm. The protein localises to the nucleoid. Its function is as follows. May be involved in recombination. In Xanthomonas axonopodis pv. citri (strain 306), this protein is Recombination-associated protein RdgC.